The following is a 418-amino-acid chain: Glutamate dehydrogenase (418 aa).

Residue Lys-105 is part of the active site. Residue 217 to 223 (GYGNVGY) coordinates NAD(+).

This sequence belongs to the Glu/Leu/Phe/Val dehydrogenases family. As to quaternary structure, homohexamer.

It is found in the cytoplasm. The enzyme catalyses L-glutamate + NAD(+) + H2O = 2-oxoglutarate + NH4(+) + NADH + H(+). It catalyses the reaction L-glutamate + NADP(+) + H2O = 2-oxoglutarate + NH4(+) + NADPH + H(+). This Aeropyrum pernix (strain ATCC 700893 / DSM 11879 / JCM 9820 / NBRC 100138 / K1) protein is Glutamate dehydrogenase (gdhA).